Reading from the N-terminus, the 44-residue chain is Small ribosomal subunit protein eS7 (44 aa).

The span at 18–34 (KPTRKSRIKNKQKRPRS) shows a compositional bias: basic residues. Residues 18 to 44 (KPTRKSRIKNKQKRPRSRTLTAVHDAI) are disordered.

Belongs to the eukaryotic ribosomal protein eS7 family. As to quaternary structure, component of the small ribosomal subunit.

The protein resides in the cytoplasm. Its subcellular location is the cytoskeleton. The protein localises to the microtubule organizing center. It localises to the centrosome. It is found in the nucleus. In terms of biological role, component of the small ribosomal subunit. The ribosome is a large ribonucleoprotein complex responsible for the synthesis of proteins in the cell. Required for rRNA maturation. The chain is Small ribosomal subunit protein eS7 (rps7) from Salmo salar (Atlantic salmon).